The sequence spans 101 residues: Protein snet-1 (101 aa).

The signal sequence occupies residues 1–20 (MARFTPLLMILLALVPLYYS).

May be degraded by the nep-2 peptidase. In terms of tissue distribution, expressed in coelomocytes, the ASK sensory neurons and interneurons AIB, AIM and PVQ.

Its subcellular location is the secreted. The protein resides in the perikaryon. Its function is as follows. Negatively regulates chemotaxis and olfactory plasticity which is the change from positive chemotaxis to dispersal after prolonged exposure to an odorant. May be down-regulated in response to pheromone exposure, resulting in promotion of olfactory plasticity. The sequence is that of Protein snet-1 from Caenorhabditis elegans.